The sequence spans 366 residues: Terpene cyclase-like protein flvF (366 aa).

It belongs to the terpene synthase family. In terms of assembly, homodimer.

The catalysed reaction is N,N-dimethyl-cadaverine + 2,6,9-trimethyl-13-oxatetracyclo[6.3.1.1(6,9).0(1,5)]tridecane carbocation = pre-flavunoidine + H(+). It functions in the pathway secondary metabolite biosynthesis; terpenoid biosynthesis. In terms of biological role, terpene cyclase-like protein; part of the gene cluster that mediates the biosynthesis of flavunoidine, an alkaloidal terpenoid with a tetracyclic cage-like core connected to dimethylcadaverine via a C-N bond and acylated with 5,5-dimethyl-L-pipecolate. The tetracyclic core is synthesized by the terpene cyclase flvE and the cytochrome P450 monooxygenase flvD. The terpene cyclase flvE catalyzes the cyclization of farnesyl pyrophosphate (FPP) to form (1R,4R,5S)-(+)-acoradiene and the cytochrome P450 monooxygenase flvD is then responsible for oxidative conversion of (1R,4R,5S)-(+)-acoradiene into the tetracyclic cage present in the final product flavunoidine. In parallel, the N-methyltransferase flvH dimethylates L-lysine to give N,N-dimethyl-L-Lysin which is decarboxylated by flvG to afford dimethylcadaverine. The terpene cyclase-like protein flvF is the enzyme that attaches the dimethylcadaverine precusor at the C-7 of the tetracyclic cage to yield pre-flavunoidine. The cytochrome monooxygenase flvC hydroxylates the C-10 position of pre-flavunoidine whereas the NRPS flvI acylates the terpenoid core at the hydroxylated C-10 with dimethylpipecolate to yield final flavunoidine. The bifunctional enzyme flvA and the dehydrogenase flvB are responsible for the synthesis of the dimethylpipecolate precursor. The PLP-dependent lyase domain of flvA might use L-O-acetyl-homoserine and alpha-keto-isovalerate to form an intermediary ketone that can cyclize intramolecularly to yield an imine. The imine can be reduced by flvB to yield the 6-carboxylated pipecolate. The C-terminal alpha-KG-dependent oxygenase domain of flvA is then proposed to catalyze the decarboxylation to yield dimethylpipecolate. The chain is Terpene cyclase-like protein flvF from Aspergillus flavus (strain ATCC 200026 / FGSC A1120 / IAM 13836 / NRRL 3357 / JCM 12722 / SRRC 167).